A 376-amino-acid chain; its full sequence is Lipid-A-disaccharide synthase (376 aa).

It belongs to the LpxB family.

It carries out the reaction a lipid X + a UDP-2-N,3-O-bis[(3R)-3-hydroxyacyl]-alpha-D-glucosamine = a lipid A disaccharide + UDP + H(+). Its pathway is bacterial outer membrane biogenesis; LPS lipid A biosynthesis. Its function is as follows. Condensation of UDP-2,3-diacylglucosamine and 2,3-diacylglucosamine-1-phosphate to form lipid A disaccharide, a precursor of lipid A, a phosphorylated glycolipid that anchors the lipopolysaccharide to the outer membrane of the cell. The chain is Lipid-A-disaccharide synthase from Pseudomonas fluorescens (strain Pf0-1).